The sequence spans 1483 residues: MQRSPLEKASVISKLFFSWTRPILRKGYRQRLELSDIYQIPSTDSADNLSEKLEREWDRELASKKNPKLINALRRCFFWKFMFYGILLYLGEVTKAVQPLLLGRIIASYDPDNKVERSIAIYLGIGLCLLFVVRTLLLHPAIFGLHHIGMQMRIAMFSLIYKKTLKLSSRVLDKISIGQLISLLSNNLNKFDEGLALAHFVWIVPLQVTLLMGLLWELLQASAFCGLAFLIIVAFYQAGLGRMMMKYRDKRGGKINERLVITSEMIENIQSVKAYCWEEAMEKMIENLRQTELKLTRKAAYVRYCNSSAFFFSGFFVVFLSVLPYALMKGIILRKIFTTISFCIVLRMAVTRQFPWAVQTWYDSLGAINKIQDFLQKQEYKTLEYNLTTTEVVMENATAYWEEGFGGLFEKAKQNNNNRKISNGDNSLFFSNFSLLGTPVLKDINFKIERGQLLAVAGSTGAGKTSLLMMIMGELEPSAGKIKHSGRISFCSQFSWIMPGTIKENIIFGVSYDEYRYRSVIKACQLEEDISKFTEKDNIVLGEGGITLSGGQRARISLARAVYKDADLYLLDSPFGYLDVLTEKEIFESCVCKLMANKTRILVTSKMEHLKKADKILILHEGSTYFYGTFSELQNLRPDFSSKLMGYDSFDQFSAERRNSILTETLRRFSLEGDGAVSWNETRKQSFKQTGEFGEKRKNSILNSMNSARKFSIVQKTTLQMNGIEANSEEPLERRLSLVPDSELGETILPRSNVINTGPTLQGRRRQSVLNLMTGSSGNQGQGIHRKAAASTRKMSLAPSTNFTEMDIYSRRLSQDSGLEISEEINEEDLKECFFDDVENIPAVTTWNTYLRYITIHKSLIFVLIWCLIIFLAEVAVSLVFLLLFEKSPRQDTGNVTKSSNNSSYGVIITNTSSYYIIYIYVGVADTLLALGLLRGLPLVHTLITASKILHHKMLHSVLQAPMSTLNTLKAGGILNRFSKDIAILDDLLPLTIFDFIQLILIVIGAVIVVSVLEPYIFLATVPVIIAFVMLRAYFLHTSQQLKQLESEGRSPIFTHLVTSLKGLWTLRAFGRQPYFETLFHKALNLHTANWFLYLSTLRWFQMRIEMIFVIFFIAVTFISILTTGDGEGRVGIILTLAMNIMNTLQWAVNSSIDVDSLMRSVSRVFKFIDMPTEEIKPSKPVKPSKEGPLSKVMIIENEHVKKDDIWPSGGQMTVKDLTAKYIESGNAILENISFSISPGQRVGLLGRTGSGKSTLLSAFLRLLNTEGEIQIDGVSWDSITLQQWRKAFGVIPQKVFIFSGTFRKNLDPYEQWNDQEIWKVADEVGLRSVIEQFPGKLDFVLVDGGYVLSHGHKQLMCLARSVLSKAKILLLDEPSAHLDPITYQIIRRTIKQAFADCTVILCEHRIEAMLECQRFLVIEENKVRQYDSIQKLLSEKSLFRQAISNSDRLKLFPHRNSSKHKSRSKIAALKEETEEEVQETRL.

The Cytoplasmic portion of the chain corresponds to M1–F77. The chain crosses the membrane as a helical span at residues F78 to Q98. Positions F81 to L365 constitute an ABC transmembrane type-1 1 domain. Residues P99–Y122 lie on the Extracellular side of the membrane. A helical transmembrane segment spans residues L123–H146. Residues H147–L195 are Cytoplasmic-facing. The chain crosses the membrane as a helical span at residues A196 to W216. Residues E217–S222 are Extracellular-facing. Residues A223–M243 traverse the membrane as a helical segment. Over M244–K298 the chain is Cytoplasmic. Residues A299 to F319 traverse the membrane as a helical segment. Residues L320–T339 lie on the Extracellular side of the membrane. A helical membrane pass occupies residues I340–V358. At Q359 to S859 the chain is on the cytoplasmic side. Residues W401, S434, G458–T465, and Q493 contribute to the ATP site. One can recognise an ABC transporter 1 domain in the interval N423–G646. The S-palmitoyl cysteine moiety is linked to residue C524. Residues S549 and S660 each carry the phosphoserine modification. The disordered R region stretch occupies residues S654–E832. A Phosphoserine; by PKA modification is found at S670. The residue at position 686 (S686) is a Phosphoserine. A Glycyl lysine isopeptide (Lys-Gly) (interchain with G-Cter in ubiquitin) cross-link involves residue K688. Residues S700 and S712 each carry the phosphoserine modification. T717 carries the post-translational modification Phosphothreonine. Residues S737, S768, S791, S796, and S814 each carry the phosphoserine modification. A helical transmembrane segment spans residues L860 to V880. The region spanning L860–S1157 is the ABC transmembrane type-1 2 domain. Residues F881–I920 lie on the Extracellular side of the membrane. N-linked (GlcNAc...) asparagine glycosylation is found at N895, N901, N902, and N911. The discontinuously helical transmembrane segment at Y921–H941 threads the bilayer. Residues T942 to T992 lie on the Cytoplasmic side of the membrane. Residues I993–L1013 traverse the membrane as a helical segment. Over E1014–P1015 the chain is Extracellular. The chain crosses the membrane as a helical span at residues Y1016–L1036. The Cytoplasmic portion of the chain corresponds to H1037–T1097. The helical transmembrane segment at L1098 to F1118 threads the bilayer. Topologically, residues I1119–G1132 are extracellular. The helical transmembrane segment at I1133 to I1153 threads the bilayer. Residues D1154–L1483 lie on the Cytoplasmic side of the membrane. The 234-residue stretch at M1213 to N1446 folds into the ABC transporter 2 domain. ATP contacts are provided by residues Y1222 and G1247–S1254. Residues R1389–L1483 form an interaction with GORASP2 region. C1398 carries the S-palmitoyl cysteine lipid modification. 2 positions are modified to phosphoserine: S1447 and S1459. Residues H1455–S1465 are compositionally biased toward basic residues. The segment at H1455–L1483 is disordered. The segment covering E1473 to L1483 has biased composition (acidic residues). Positions T1481–L1483 match the PDZ-binding motif.

It belongs to the ABC transporter superfamily. ABCC family. CFTR transporter (TC 3.A.1.202) subfamily. Monomer; does not require oligomerization for channel activity. May form oligomers in the membrane. Interacts with SLC26A3, SLC26A6 and NHERF1. Interacts with SHANK2. Interacts with MYO6. Interacts (via C-terminus) with GOPC (via PDZ domain); this promotes CFTR internalization and thereby decreases channel activity. Interacts with SLC4A7 through NHERF1. Found in a complex with MYO5B and RAB11A. Interacts with ANO1. Interacts with SLC26A8. Interacts with AHCYL1; the interaction increases CFTR activity. Interacts with CSE1L. The core-glycosylated form interacts with GORASP2 (via PDZ GRASP-type 1 domain) in respone to ER stress. Interacts with MARCHF2; the interaction leads to CFTR ubiqtuitination and degradation. Interacts with ADGRG2. N-glycosylated. Post-translationally, phosphorylated; cAMP treatment promotes phosphorylation and activates the channel. Dephosphorylation decreases the ATPase activity (in vitro). Phosphorylation at PKA sites activates the channel. Phosphorylation at PKC sites enhances the response to phosphorylation by PKA. Phosphorylated by AMPK; this inhibits channel activity. In terms of processing, ubiquitinated, leading to its degradation in the lysosome. Deubiquitination by USP10 in early endosomes enhances its endocytic recycling to the cell membrane. Ubiquitinated by RNF185 during ER stress. Ubiquitinated by MARCHF2.

It is found in the apical cell membrane. The protein resides in the early endosome membrane. Its subcellular location is the cell membrane. The protein localises to the recycling endosome membrane. It localises to the endoplasmic reticulum membrane. It is found in the nucleus. It catalyses the reaction ATP + H2O + closed Cl(-) channel = ADP + phosphate + open Cl(-) channel.. It carries out the reaction chloride(in) = chloride(out). The enzyme catalyses hydrogencarbonate(in) = hydrogencarbonate(out). The catalysed reaction is ATP + H2O = ADP + phosphate + H(+). In terms of biological role, epithelial ion channel that plays an important role in the regulation of epithelial ion and water transport and fluid homeostasis. Mediates the transport of chloride ions across the cell membrane. The ion channel is also permeable to HCO(3)(-); selectivity depends on the extracellular chloride concentration. Exerts its function also by modulating the activity of other ion channels and transporters. Contributes to the regulation of the pH and the ion content of the epithelial fluid layer. Modulates the activity of the epithelial sodium channel (ENaC) complex, in part by regulating the cell surface expression of the ENaC complex. May regulate bicarbonate secretion and salvage in epithelial cells by regulating the transporter SLC4A7. Can inhibit the chloride channel activity of ANO1. Plays a role in the chloride and bicarbonate homeostasis during sperm epididymal maturation and capacitation. The chain is Cystic fibrosis transmembrane conductance regulator from Atelerix albiventris (Middle-African hedgehog).